The sequence spans 216 residues: Probable succinyl-CoA:3-ketoacid coenzyme A transferase subunit B (216 aa).

Residue glutamate 47 is part of the active site.

The protein belongs to the 3-oxoacid CoA-transferase subunit B family. Heterodimer of a subunit A and a subunit B.

The catalysed reaction is a 3-oxo acid + succinyl-CoA = a 3-oxoacyl-CoA + succinate. The chain is Probable succinyl-CoA:3-ketoacid coenzyme A transferase subunit B (scoB) from Bacillus subtilis (strain 168).